The chain runs to 349 residues: Cobalt-precorrin-5B C(1)-methyltransferase (349 aa).

Belongs to the CbiD family.

It carries out the reaction Co-precorrin-5B + S-adenosyl-L-methionine = Co-precorrin-6A + S-adenosyl-L-homocysteine. It functions in the pathway cofactor biosynthesis; adenosylcobalamin biosynthesis; cob(II)yrinate a,c-diamide from sirohydrochlorin (anaerobic route): step 6/10. Catalyzes the methylation of C-1 in cobalt-precorrin-5B to form cobalt-precorrin-6A. The protein is Cobalt-precorrin-5B C(1)-methyltransferase of Saccharolobus islandicus (strain L.S.2.15 / Lassen #1) (Sulfolobus islandicus).